Here is a 575-residue protein sequence, read N- to C-terminus: Developmental and secondary metabolism regulator VEL1 (575 aa).

One can recognise a Velvet domain in the interval 21 to 225 (GRKLKYTLTV…AEQGCRVRIR (205 aa)). Positions 35–40 (ERARAC) match the Nuclear localization signal motif. 2 disordered regions span residues 36–56 (RARA…VDPP) and 227–402 (DVRM…QSYE). Residues 274–284 (VHEDPQQRRGS) show a composition bias toward basic and acidic residues. Polar residues predominate over residues 294-308 (VVNTPFRTPSISPST). Residues 334 to 346 (IQPPHPPPPPPSS) show a composition bias toward pro residues. 2 stretches are compositionally biased toward polar residues: residues 355-365 (HHNQGPSTQFR) and 385-402 (SYSQ…QSYE). The PEST stretch occupies residues 465–509 (AEQPLAMSPLASVTSISRGTQNSAPMPSHNYNKLERSGSYSQYAP). The disordered stretch occupies residues 513–549 (EAPKSTNKRSFNDVFSTPTESLSNGRRPSAIGIDIEE). Polar residues predominate over residues 516–538 (KSTNKRSFNDVFSTPTESLSNGR).

It belongs to the velvet family. VeA subfamily. Component of the heterotrimeric velvet complex composed of LAE1, VEL1 and VEL2; VEL1 acting as a bridging protein between LAE1 and VEL2.

It is found in the nucleus. It localises to the cytoplasm. Functionally, component of the velvet transcription factor complex that controls sexual/asexual developmental ratio in response to light, promoting sexual development in the darkness while stimulating asexual sporulation under illumination. The velvet complex hat acts as a global regulator for secondary metabolite gene expression. Controls the expression of the oxalic acid and melanin gene clusters. Also controls the expression of proteases and carbohydrate-active enzymes. Involved in the resistance to oxidative stress. Required for full virulence. This chain is Developmental and secondary metabolism regulator VEL1, found in Botryotinia fuckeliana (strain B05.10) (Noble rot fungus).